We begin with the raw amino-acid sequence, 569 residues long: Urease subunit alpha (569 aa).

The region spanning 131–569 (GGIDTHIHFI…LPLAQRYLLL (439 aa)) is the Urease domain. Ni(2+) is bound by residues H136, H138, and K219. The residue at position 219 (K219) is an N6-carboxylysine. H221 is a substrate binding site. The Ni(2+) site is built by H248 and H274. H322 (proton donor) is an active-site residue. Position 362 (D362) interacts with Ni(2+).

This sequence belongs to the metallo-dependent hydrolases superfamily. Urease alpha subunit family. In terms of assembly, heterotrimer of UreA (gamma), UreB (beta) and UreC (alpha) subunits. Three heterotrimers associate to form the active enzyme. It depends on Ni cation as a cofactor. Post-translationally, carboxylation allows a single lysine to coordinate two nickel ions.

It localises to the cytoplasm. The catalysed reaction is urea + 2 H2O + H(+) = hydrogencarbonate + 2 NH4(+). It participates in nitrogen metabolism; urea degradation; CO(2) and NH(3) from urea (urease route): step 1/1. The polypeptide is Urease subunit alpha (Parasynechococcus marenigrum (strain WH8102)).